Reading from the N-terminus, the 493-residue chain is Putative type II secretion system protein E (493 aa).

249 to 256 serves as a coordination point for ATP; sequence GPTGSGKS. Positions 382, 385, 415, and 418 each coordinate Zn(2+).

It belongs to the GSP E family. In terms of assembly, forms homooligomers; most probably hexamers. Interacts with GspL. Zn(2+) serves as cofactor.

The protein localises to the cell inner membrane. It catalyses the reaction ATP + H2O + cellular proteinSide 1 = ADP + phosphate + cellular proteinSide 2.. Its function is as follows. ATPase component of the type II secretion system required for the energy-dependent secretion of extracellular factors such as proteases and toxins from the periplasm. Acts as a molecular motor to provide the energy that is required for assembly of the pseudopilus and the extrusion of substrates generated in the cytoplasm. This is Putative type II secretion system protein E (gspE) from Escherichia coli (strain K12).